The following is a 224-amino-acid chain: Redox-sensing transcriptional repressor Rex (224 aa).

Positions 17 to 56 form a DNA-binding region, H-T-H motif; the sequence is RYHRYLEELLKNDVKRISSRELSEKMGVTASQIRQDLNNF. Residue 91–96 participates in NAD(+) binding; sequence GAGNLG.

Belongs to the transcriptional regulatory Rex family. Homodimer.

Its subcellular location is the cytoplasm. Functionally, modulates transcription in response to changes in cellular NADH/NAD(+) redox state. In Thermoanaerobacter pseudethanolicus (strain ATCC 33223 / 39E) (Clostridium thermohydrosulfuricum), this protein is Redox-sensing transcriptional repressor Rex.